Reading from the N-terminus, the 350-residue chain is Homoserine O-succinyltransferase (350 aa).

Cysteine 146 serves as the catalytic Acyl-thioester intermediate. Lysine 167 and serine 196 together coordinate substrate. Catalysis depends on histidine 239, which acts as the Proton acceptor. Glutamate 241 is an active-site residue. Residue arginine 253 coordinates substrate.

The protein belongs to the MetA family.

The protein localises to the cytoplasm. It carries out the reaction L-homoserine + succinyl-CoA = O-succinyl-L-homoserine + CoA. It participates in amino-acid biosynthesis; L-methionine biosynthesis via de novo pathway; O-succinyl-L-homoserine from L-homoserine: step 1/1. In terms of biological role, transfers a succinyl group from succinyl-CoA to L-homoserine, forming succinyl-L-homoserine. The polypeptide is Homoserine O-succinyltransferase (Cardiobacterium hominis (strain ATCC 15826 / DSM 8339 / NCTC 10426 / 6573)).